We begin with the raw amino-acid sequence, 179 residues long: MINKSVIMDEAAIRRALTRIAHEIIERNKGVEDLIIVGIKTRGIYLAQRLVERIEMIENVKVPVGELDITFYRDDLQHKSEDAILQGSKLPDQITGKTVILVDDVLYTGRTVRAALDALIDNGRPRMIQLAVLVDRGHRELPIRPDFVGKNLPTARTEIVDVQLAEVDVMDIVSIRQLL.

The PRPP-binding motif lies at 99 to 111; it reads VILVDDVLYTGRT.

This sequence belongs to the purine/pyrimidine phosphoribosyltransferase family. PyrR subfamily. As to quaternary structure, homodimer and homohexamer; in equilibrium.

It catalyses the reaction UMP + diphosphate = 5-phospho-alpha-D-ribose 1-diphosphate + uracil. Regulates transcriptional attenuation of the pyrimidine nucleotide (pyr) operon by binding in a uridine-dependent manner to specific sites on pyr mRNA. This disrupts an antiterminator hairpin in the RNA and favors formation of a downstream transcription terminator, leading to a reduced expression of downstream genes. In terms of biological role, also displays a weak uracil phosphoribosyltransferase activity which is not physiologically significant. The protein is Bifunctional protein PyrR of Brevibacillus brevis (strain 47 / JCM 6285 / NBRC 100599).